The chain runs to 509 residues: Telomeric repeat-binding factor 2-interacting protein 1 (509 aa).

A BRCT domain is found at 1 to 91; that stretch reads MAALGGLTHS…KLLDVDDYRL (91 aa). A disordered region spans residues 93–168; the sequence is GSHGRPRKSQ…RKKENKMDCS (76 aa). Residues 115-127 show a composition bias toward polar residues; that stretch reads VGESSQESDQKQQ. Over residues 159 to 168 the composition is skewed to basic and acidic residues; it reads RKKENKMDCS. One can recognise a Myb-like domain in the interval 185 to 239; sequence RRNVFTEKEDVAIMLYVRENAPHRGTGVSLWKEMEQKQVVKRTWQAIKNRYFRYL. Disordered stretches follow at residues 249 to 359 and 399 to 423; these read LTDD…ENQD and DLPSSQSQTQVDEVSSSPDASESEG. Basic and acidic residues-rich tracts occupy residues 286 to 296 and 321 to 344; these read GVAEKTGEKLS and VEERGQEVTEGAIKRSEGNKKSTE. Residues 401-418 are compositionally biased toward polar residues; sequence PSSQSQTQVDEVSSSPDA. The Nuclear localization signal signature appears at 493 to 509; sequence QKYGADNVAKRVAFLAS.

The protein belongs to the RAP1 family. As to quaternary structure, homodimer. Component of the shelterin complex (telosome). Interacts with terf2; the interaction is direct.

It is found in the nucleus. Its subcellular location is the chromosome. The protein localises to the telomere. Functionally, acts both as a regulator of telomere function and as a transcription regulator. Involved in the regulation of telomere length and protection as a component of the shelterin complex (telosome). Does not bind DNA directly: recruited to telomeric double-stranded 5'-TTAGGG-3' repeats via its interaction with terf2. Independently of its function in telomeres, also acts as a transcription regulator: recruited to extratelomeric 5'-TTAGGG-3' sites via its association with terf2 or other factors, and regulates gene expression. The polypeptide is Telomeric repeat-binding factor 2-interacting protein 1 (terf2ip) (Xenopus tropicalis (Western clawed frog)).